Reading from the N-terminus, the 944-residue chain is Probable UDP-N-acetylglucosamine--peptide N-acetylglucosaminyltransferase SPINDLY (944 aa).

11 TPR repeats span residues 34–67 (GTDALRYANILRSRNKFADALQLYTTVLDKDGAN), 68–101 (VEALIGKGICLQAQSLPRQALDCFTEAVKVDPKN), 102–135 (ACALTHCGMIYKDEGHLVEAAEAYQKARSADPSY), 143–176 (AIVLTDLGTSLKLAGNTEDGIQKYCEALEVDSHY), 177–210 (APAYYNLGVVYSEMMQFDVALTCYEKAALERPLY), 211–244 (AEAYCNMGVIYKNRGELDAAIACYDRCLTISPNF), 252–285 (AIALTDLGTKVKIEGDINQGVAYYKKALFYNWHY), 286–319 (ADAMYNLGVAYGEMLNFEMAIVFYELALHFNPRC), 320–353 (AEACNNLGVIYKDRDNLDKAVECYQMALSIKPNF), 355–387 (QSLNNLGVVYTVQGKMDAAASMIEKAILANPTY), and 388–421 (AEAYNNLGVLYRDAGSITLSVQAYERCLQIDPDS). A catalytic region region spans residues 422–944 (RNAGQNRLLA…RCEANGHSSR (523 aa)). The segment at 873–944 (NATAEEDNQS…RCEANGHSSR (72 aa)) is disordered. The span at 897–911 (PQPQIMVNGVTSPEG) shows a compositional bias: polar residues.

It belongs to the glycosyltransferase 41 family. O-GlcNAc transferase subfamily. As to expression, expressed in all parts of plants, including immature leaf blade, leaf sheath, mature leaf blade, roots, germinating embryos and aleurone layers.

The protein localises to the nucleus. It catalyses the reaction L-seryl-[protein] + UDP-N-acetyl-alpha-D-glucosamine = 3-O-(N-acetyl-beta-D-glucosaminyl)-L-seryl-[protein] + UDP + H(+). It carries out the reaction L-threonyl-[protein] + UDP-N-acetyl-alpha-D-glucosamine = 3-O-(N-acetyl-beta-D-glucosaminyl)-L-threonyl-[protein] + UDP + H(+). Its pathway is protein modification; protein glycosylation. Functionally, probable O-linked N-acetylglucosamine transferase (OGT) involved in various processes such as gibberellin (GA) signaling pathway. OGTs catalyze the addition of nucleotide-activated sugars directly onto the polypeptide through O-glycosidic linkage with the hydroxyl of serine or threonine. Probably acts by adding O-linked sugars to yet unknown proteins. The chain is Probable UDP-N-acetylglucosamine--peptide N-acetylglucosaminyltransferase SPINDLY (SPY) from Hordeum vulgare (Barley).